The sequence spans 146 residues: Snake venom vascular endothelial growth factor toxin (146 aa).

The first 24 residues, Met-1 to Gly-24, serve as a signal peptide directing secretion. Gln-25 carries the pyrrolidone carboxylic acid modification. 3 cysteine pairs are disulfide-bonded: Cys-38–Cys-80, Cys-69–Cys-115, and Cys-73–Cys-117. A disordered region spans residues Arg-118–Val-146. Residues Asn-133 to Val-146 show a composition bias toward basic and acidic residues.

Belongs to the PDGF/VEGF growth factor family. Snake venom VEGF subfamily. As to quaternary structure, homodimer; disulfide-linked. Interacts with VEGF receptor-1 (FLT1) with a high affinity, whereas it binds to VEGF receptor-2 (KDR) with a low affinity. Does not bind VEGF receptor-3 (FLT4). Expressed by the venom gland.

Its subcellular location is the secreted. Its function is as follows. Snake venom VEGFs that may contribute to venom dispersion and prey subjugation by inducing vascular permeability and hypotension. This protein induces an increase in capillary permeability after intradermal injection, as well as a drastic hypotensive effect after intravenous injection. The hypotension is mediated by nitric oxide (NO), which is produced by VEGF-activated endothelium NO synthase. Also induces angiogenesis in vitro. Like other crotalid VEGFs, this protein interacts with VEGF receptor-1 (FLT1) with a high affinity, whereas it binds to VEGF receptor-2 (KDR) with a low affinity. This Bothrops erythromelas (Caatinga lance head) protein is Snake venom vascular endothelial growth factor toxin.